The sequence spans 492 residues: MAPVGVEKKLLLGPNGPAVAAAGDLTSEEEEGQSLWSSILSEVSTRARSKLPSGKNILVFGEDGSGKTTLMTKLQGAEHGKKGRGLEYLYLSVHDEDRDDHTRCNVWILDGDLYHKGLLKFAVSAESLRETLVIFVADMSRPWTIMESLQKWASVLREHIDKMKIPPEEMRDLERKFMKEFQDYIEPEEGCQGSPQRRGPLTSGSDEDSVALPLGDNVLTHNLGIPVLVVCTKCDAMSVLEKEHDYRDEHLDFIQAHLRRFCLQYGAALIYTSVKEEKNLDLLYKYIVHKTYGFHFTIPALVVEKDAVFIPAGWDNEKKIAILHENFTTVKPEDAYEDFIVKPPVRKLVHDKELAAEDEQVFLMKQQSLLAKQPATPTRTSESPARGPSGSPRTQGRGGPASVPSASPGTSVKKPDPNIKNNAASEGVLASFFNSLLSKKTGSPGSPSAGGVQSTAKKSGQKTVLSNVQEELDRMTRKPDSMVTNSSTENEA.

An ATP-binding site is contributed by 61 to 68; that stretch reads GEDGSGKT. Disordered regions lie at residues 188 to 207, 370 to 423, and 437 to 492; these read EEGC…GSDE, LAKQ…KNNA, and LSKK…ENEA. Residues S194, S383, and S391 each carry the phosphoserine modification. Residues 370-383 are compositionally biased toward polar residues; the sequence is LAKQPATPTRTSES. R397 carries the omega-N-methylarginine modification. Over residues 437-469 the composition is skewed to polar residues; that stretch reads LSKKTGSPGSPSAGGVQSTAKKSGQKTVLSNVQ. T441 bears the Phosphothreonine mark. A phosphoserine mark is found at S443 and S446. Positions 471-480 are enriched in basic and acidic residues; the sequence is ELDRMTRKPD. A compositionally biased stretch (polar residues) spans 482–492; sequence MVTNSSTENEA.

Belongs to the dynein light intermediate chain family. In terms of assembly, homodimer. The cytoplasmic dynein 1 complex consists of two catalytic heavy chains (HCs) and a number of non-catalytic subunits presented by intermediate chains (ICs), light intermediate chains (LICs) and light chains (LCs); the composition seems to vary in respect to the IC, LIC and LC composition. The heavy chain homodimer serves as a scaffold for the probable homodimeric assembly of the respective non-catalytic subunits. The ICs and LICs bind directly to the HC dimer and the LCs assemble on the IC dimer. Interacts with DYNC1H1; DYNC1LI1 and DYNC1LI2 bind mutually exclusive to DYNC1H.

Its subcellular location is the cytoplasm. The protein resides in the cytoskeleton. In terms of biological role, acts as one of several non-catalytic accessory components of the cytoplasmic dynein 1 complex that are thought to be involved in linking dynein to cargos and to adapter proteins that regulate dynein function. Cytoplasmic dynein 1 acts as a motor for the intracellular retrograde motility of vesicles and organelles along microtubules. May play a role in binding dynein to membranous organelles or chromosomes. The polypeptide is Cytoplasmic dynein 1 light intermediate chain 2 (Dync1li2) (Mus musculus (Mouse)).